A 395-amino-acid chain; its full sequence is Protein hedgehog (395 aa).

Positions 1 to 26 (MDNHSSVPWASAASVTCLSLDAKCHS) are cleaved as a signal peptide. The segment covering 26-43 (SSSSSCSSKSTASSISAS) has biased composition (low complexity). The interval 26 to 46 (SSSSSCSSKSTASSISASPET) is disordered. The propeptide occupies 27–82 (SSSSCSSKSTASSISASPETQTMRHIAHTQRCLSRLTSLVALLLIVLPMMFSPAHS). Cys83 carries N-palmitoyl cysteine lipidation. Positions 147, 148, 153, 183, 184, 187, and 189 each coordinate Ca(2+). Gly255 is lipidated: Cholesterol glycine ester.

Belongs to the hedgehog family. In terms of assembly, interacts with shf. Post-translationally, the C-terminal part of the hedgehog protein precursor displays an autoproteolysis activity that results in the cleavage of the full-length protein into two parts (N-product and C-product). In addition, the C-terminal part displays a cholesterol transferase activity that results by the covalent attachment of a cholesterol moiety to the C-terminal of the newly generated N-product. The N-product is the active species in both local and long-range signaling, whereas the C-product has no signaling activity. Cholesterylation is required for N-product targeting to lipid rafts and multimerization. In terms of processing, N-palmitoylation by Rasp of the hedgehog N-product, within the secretory pathway, is required for the embryonic and larval patterning activities of the hedgehog signal.

The protein localises to the nucleus. It localises to the cytoplasm. Its subcellular location is the cell membrane. It carries out the reaction glycyl-L-cysteinyl-[protein] + cholesterol + H(+) = [protein]-C-terminal glycyl cholesterol ester + N-terminal L-cysteinyl-[protein]. Its function is as follows. The C-terminal part of the hedgehog protein precursor displays an autoproteolysis activity that results in the cleavage of the full-length protein into two parts (N-product and C-product). In addition, the C-terminal part displays a cholesterol transferase activity that results by the covalent attachment of a cholesterol moiety to the C-terminal of the newly generated N-product. Once cleaved, the C-product has no signaling activity and diffuses from the cell. In terms of biological role, the dually lipidated hedgehog protein N-product is a morphogen which is essential for a variety of patterning events during development. Establishes the anterior-posterior axis of the embryonic segments and patterns the larval imaginal disks. Binds to the patched (ptc) receptor, which functions in association with smoothened (smo), to activate the transcription of target genes wingless (wg), decapentaplegic (dpp) and ptc. In the absence of hh, ptc represses the constitutive signaling activity of smo through fused (fu). Essential component of a signaling pathway which regulates the Duox-dependent gut immune response to bacterial uracil; required to activate Cad99C-dependent endosome formation, norpA-dependent Ca2+ mobilization and p38 MAPK, which are essential steps in the Duox-dependent production of reactive oxygen species (ROS) in response to intestinal bacterial infection. During photoreceptor differentiation, it up-regulates transcription of Ubr3, which in turn promotes the hh-signaling pathway by mediating the ubiquitination and degradation of cos. In Drosophila simulans (Fruit fly), this protein is Protein hedgehog.